Reading from the N-terminus, the 669-residue chain is DNA mismatch repair protein MutL (669 aa).

Positions 356–371 (FEQRQNTENKQEKTFS) are enriched in basic and acidic residues. The segment at 356–379 (FEQRQNTENKQEKTFSSEESNSKP) is disordered.

It belongs to the DNA mismatch repair MutL/HexB family.

In terms of biological role, this protein is involved in the repair of mismatches in DNA. It is required for dam-dependent methyl-directed DNA mismatch repair. May act as a 'molecular matchmaker', a protein that promotes the formation of a stable complex between two or more DNA-binding proteins in an ATP-dependent manner without itself being part of a final effector complex. The chain is DNA mismatch repair protein MutL from Staphylococcus aureus (strain MRSA252).